The following is a 504-amino-acid chain: Anaerobic nitric oxide reductase transcription regulator NorR (504 aa).

A 4-aspartylphosphate modification is found at Asp57. The Sigma-54 factor interaction domain maps to 187–416; that stretch reads MIGLSPGMTQ…LEHAIHRAVV (230 aa). Residues 215–222 and 278–287 contribute to the ATP site; these read GETGTGKE and ADNGTLFLDE. The H-T-H motif DNA-binding region spans 479-498; the sequence is WAACARMLETDVANLHRLAK.

Its pathway is nitrogen metabolism; nitric oxide reduction. Its function is as follows. Required for the expression of anaerobic nitric oxide (NO) reductase, acts as a transcriptional activator for at least the norVW operon. Activation also requires sigma-54. In Escherichia coli O6:K15:H31 (strain 536 / UPEC), this protein is Anaerobic nitric oxide reductase transcription regulator NorR.